The sequence spans 400 residues: MDPNLDQDTLPTHEEIDNDVDSAEEEPPEPPLLPDDIDDDDSHGSRTRRQVKPPPELLRAVGACLISGHYDGGNYFRWQQSIAALYAKAGYAGDIRFHQAAIQEYALDPVLPAPRVSYDLLVAHAGLRYQALLNEQLRTGKTPPADEALKDAVRKAAQAAYDNAVKTGDYTPLIDIAFKGVDINKHASDVAQLAKMSVTMDGTHIKFTAGEMPKDKVITSNSMASPNTVMNILNLITTSANVTAVTCGIEFAIACAHQGSSRYTRHTGTSTGGSTFELIAAHVKEHCTIRQFCSYFAKVVWNHLLTHATPPVNWAKHGFTLDSRYAAFDFFDAVTNAAALPPKNGLIRAPTSEEIRAHNLNAHLLINASRQDDQVSSSAQYTAAIAQAGGFKRPQIGWGE.

Over residues 1-10 the composition is skewed to polar residues; that stretch reads MDPNLDQDTL. Positions 1–54 are disordered; the sequence is MDPNLDQDTLPTHEEIDNDVDSAEEEPPEPPLLPDDIDDDDSHGSRTRRQVKPP. The segment covering 16-28 has biased composition (acidic residues); the sequence is IDNDVDSAEEEPP.

This sequence belongs to the potexvirus capsid protein family.

The protein resides in the virion. In terms of biological role, required for genome encapsidation. The protein is Capsid protein (ORF3) of Botryotinia fuckeliana (Noble rot fungus).